The following is a 275-amino-acid chain: Methylglyoxal reductase DkgA (275 aa).

Tyr-51 functions as the Proton donor in the catalytic mechanism. His-107 provides a ligand contact to substrate. 187-241 provides a ligand contact to NADP(+); the sequence is SPLAQGGKGVFDQKVIRDLADKYGKTPAQIVIRWHLDSGLVVIPKSVTPSRIAEN.

The protein belongs to the aldo/keto reductase family. Monomer.

The protein resides in the cytoplasm. It carries out the reaction hydroxyacetone + NADP(+) = methylglyoxal + NADPH + H(+). In terms of biological role, aldo-keto reductase that significantly contributes to cellular methylglyoxal detoxification by catalyzing the NADPH-dependent conversion of methylglyoxal to acetol. This chain is Methylglyoxal reductase DkgA, found in Escherichia coli O157:H7.